The chain runs to 104 residues: Large ribosomal subunit protein uL24 (104 aa).

The protein belongs to the universal ribosomal protein uL24 family. In terms of assembly, part of the 50S ribosomal subunit.

One of two assembly initiator proteins, it binds directly to the 5'-end of the 23S rRNA, where it nucleates assembly of the 50S subunit. Functionally, one of the proteins that surrounds the polypeptide exit tunnel on the outside of the subunit. This Bradyrhizobium sp. (strain BTAi1 / ATCC BAA-1182) protein is Large ribosomal subunit protein uL24.